The following is a 57-amino-acid chain: Potassium channel toxin alpha-KTx 17.2 (57 aa).

The N-terminal stretch at 1–26 is a signal peptide; it reads MKTIIVLLLLTIVAAAVVESSPKARR. 3 cysteine pairs are disulfide-bonded: Cys-30-Cys-46, Cys-36-Cys-51, and Cys-40-Cys-53.

The protein belongs to the short scorpion toxin superfamily. Potassium channel inhibitor family. Alpha-KTx 17 subfamily. Expressed by the venom gland.

The protein localises to the secreted. Inhibits voltage-gated potassium channels. The sequence is that of Potassium channel toxin alpha-KTx 17.2 from Lychas mucronatus (Chinese swimming scorpion).